The chain runs to 341 residues: Protein OPG067 (341 aa).

Residues 7–25 (VNIYMLIIVLWLYGYNFII) form a helical membrane-spanning segment. BEN domains lie at 112–222 (NQKT…RYNL) and 233–328 (EEDT…LHII).

This sequence belongs to the orthopoxvirus OPG067 family. As to quaternary structure, interacts with host CGAS; this interaction inhibits CGAS-mediated type I interferon response.

The protein resides in the host cytoplasm. Its subcellular location is the host nucleus. It localises to the membrane. In terms of biological role, major early protein present in virus factories. The presence of BEN domains suggests a possible role in organization of viral DNA during replication or transcription. Plays an essential role in the inhibition of the cGAS-dependent type I IFN induction in host dendritic cells. Mechanistically, abolishes cGAMP production by triggering host CGAS degradation via a proteasome-dependent mechanism. The chain is Protein OPG067 (OPG067) from Vaccinia virus (strain Western Reserve) (VACV).